The sequence spans 377 residues: Chaperone protein DnaJ (377 aa).

Residues 5-69 enclose the J domain; sequence DYYEVLGVSK…NKRANYDQFG (65 aa). Residues 134-216 form a CR-type zinc finger; that stretch reads GTEKEISIRK…CHGKGTETKN (83 aa). Zn(2+) is bound by residues cysteine 147, cysteine 150, cysteine 164, cysteine 167, cysteine 190, cysteine 193, cysteine 204, and cysteine 207. 4 CXXCXGXG motif repeats span residues 147–154, 164–171, 190–197, and 204–211; these read CETCDGSG, CHYCNGSG, CPVCNGTG, and CPTCHGKG.

Belongs to the DnaJ family. As to quaternary structure, homodimer. Zn(2+) serves as cofactor.

Its subcellular location is the cytoplasm. Its function is as follows. Participates actively in the response to hyperosmotic and heat shock by preventing the aggregation of stress-denatured proteins and by disaggregating proteins, also in an autonomous, DnaK-independent fashion. Unfolded proteins bind initially to DnaJ; upon interaction with the DnaJ-bound protein, DnaK hydrolyzes its bound ATP, resulting in the formation of a stable complex. GrpE releases ADP from DnaK; ATP binding to DnaK triggers the release of the substrate protein, thus completing the reaction cycle. Several rounds of ATP-dependent interactions between DnaJ, DnaK and GrpE are required for fully efficient folding. Also involved, together with DnaK and GrpE, in the DNA replication of plasmids through activation of initiation proteins. This chain is Chaperone protein DnaJ, found in Staphylococcus carnosus (strain TM300).